The following is a 249-amino-acid chain: 3-deoxy-manno-octulosonate cytidylyltransferase (249 aa).

Belongs to the KdsB family.

The protein resides in the cytoplasm. It catalyses the reaction 3-deoxy-alpha-D-manno-oct-2-ulosonate + CTP = CMP-3-deoxy-beta-D-manno-octulosonate + diphosphate. It functions in the pathway nucleotide-sugar biosynthesis; CMP-3-deoxy-D-manno-octulosonate biosynthesis; CMP-3-deoxy-D-manno-octulosonate from 3-deoxy-D-manno-octulosonate and CTP: step 1/1. The protein operates within bacterial outer membrane biogenesis; lipopolysaccharide biosynthesis. In terms of biological role, activates KDO (a required 8-carbon sugar) for incorporation into bacterial lipopolysaccharide in Gram-negative bacteria. This Brucella anthropi (strain ATCC 49188 / DSM 6882 / CCUG 24695 / JCM 21032 / LMG 3331 / NBRC 15819 / NCTC 12168 / Alc 37) (Ochrobactrum anthropi) protein is 3-deoxy-manno-octulosonate cytidylyltransferase.